Consider the following 262-residue polypeptide: Phosphonates import ATP-binding protein PhnC (262 aa).

The ABC transporter domain occupies 5 to 253 (ICVEQLSKTF…RFDHLYRSIN (249 aa)). 37 to 44 (GPSGSGKS) serves as a coordination point for ATP.

Belongs to the ABC transporter superfamily. Phosphonates importer (TC 3.A.1.9.1) family. In terms of assembly, the complex is composed of two ATP-binding proteins (PhnC), two transmembrane proteins (PhnE) and a solute-binding protein (PhnD).

It is found in the cell inner membrane. The catalysed reaction is phosphonate(out) + ATP + H2O = phosphonate(in) + ADP + phosphate + H(+). Part of the ABC transporter complex PhnCDE involved in phosphonates import. Responsible for energy coupling to the transport system. The protein is Phosphonates import ATP-binding protein PhnC of Escherichia coli O157:H7.